Consider the following 213-residue polypeptide: Peroxiredoxin-5, mitochondrial (213 aa).

The N-terminal 51 residues, 1 to 51, are a transit peptide targeting the mitochondrion; that stretch reads MVQLRFCVLGSIAGSVLRASATWTCVAGRAGRKGAGWECGGARSFSSAAVT. The region spanning 55–213 is the Thioredoxin domain; that stretch reads IKVGDTIPSV…SLAPNILSQL (159 aa). An N6-acetyllysine modification is found at K74. Position 82 is an N6-acetyllysine; alternate (K82). Residue K82 is modified to N6-succinyllysine; alternate. Residue C99 is the Cysteine sulfenic acid (-SOH) intermediate of the active site. Residue C99 is the site of S-palmitoyl cysteine attachment. Cysteines 99 and 203 form a disulfide. K115 carries the post-translational modification N6-succinyllysine. Residues S170 and S181 each carry the phosphoserine modification. The short motif at 211–213 is the Microbody targeting signal element; it reads SQL.

The protein belongs to the peroxiredoxin family. Prx5 subfamily. In terms of assembly, monomer. S-palmitoylated. Palmitoylation occurs on the active site, inhibiting its reactivity; therefore PRDX5 palmitoylation status determines its antioxidant capacity. In terms of processing, S-palmitoylated. Depalmitoylated by ABHD10.

It localises to the mitochondrion. The protein localises to the cytoplasm. It is found in the peroxisome matrix. It catalyses the reaction a hydroperoxide + [thioredoxin]-dithiol = an alcohol + [thioredoxin]-disulfide + H2O. In terms of biological role, thiol-specific peroxidase that catalyzes the reduction of hydrogen peroxide and organic hydroperoxides to water and alcohols, respectively. Plays a role in cell protection against oxidative stress by detoxifying peroxides and as sensor of hydrogen peroxide-mediated signaling events. The sequence is that of Peroxiredoxin-5, mitochondrial from Rattus norvegicus (Rat).